The following is a 293-amino-acid chain: 4-hydroxy-tetrahydrodipicolinate synthase (293 aa).

Threonine 45 is a binding site for pyruvate. The active-site Proton donor/acceptor is tyrosine 133. Lysine 161 acts as the Schiff-base intermediate with substrate in catalysis. Isoleucine 204 serves as a coordination point for pyruvate.

It belongs to the DapA family. In terms of assembly, homotetramer; dimer of dimers.

Its subcellular location is the cytoplasm. It carries out the reaction L-aspartate 4-semialdehyde + pyruvate = (2S,4S)-4-hydroxy-2,3,4,5-tetrahydrodipicolinate + H2O + H(+). It participates in amino-acid biosynthesis; L-lysine biosynthesis via DAP pathway; (S)-tetrahydrodipicolinate from L-aspartate: step 3/4. Its function is as follows. Catalyzes the condensation of (S)-aspartate-beta-semialdehyde [(S)-ASA] and pyruvate to 4-hydroxy-tetrahydrodipicolinate (HTPA). This chain is 4-hydroxy-tetrahydrodipicolinate synthase, found in Edwardsiella ictaluri (strain 93-146).